The chain runs to 210 residues: Mitochondrial cardiolipin hydrolase (210 aa).

Over 1–6 the chain is Mitochondrial intermembrane; the sequence is MLLWGR. Residues 7 to 24 form a helical membrane-spanning segment; it reads WKVVAGLAGLALSLELLL. Over 25–210 the chain is Cytoplasmic; the sequence is RYMRRRKPIR…YDFFPEKENK (186 aa). Residues 138-165 enclose the PLD phosphodiesterase domain; that stretch reads SSGYMHHKFAVVDGTVVLTGSLNWTVQA. Catalysis depends on residues His-143, Lys-145, and Asp-150.

It belongs to the phospholipase D family. MitoPLD/Zucchini subfamily. In terms of assembly, homodimer.

The protein localises to the mitochondrion outer membrane. It catalyses the reaction a cardiolipin + H2O = a 1,2-diacyl-sn-glycero-3-phospho-(1'-sn-glycerol) + a 1,2-diacyl-sn-glycero-3-phosphate + H(+). Presents phospholipase and nuclease activities, depending on the different physiological conditions. Plays a key role in mitochondrial fusion and fission via its phospholipase activity. In its phospholipase role, it uses the mitochondrial lipid cardiolipin as substrate to generate phosphatidate (PA or 1,2-diacyl-sn-glycero-3-phosphate), a second messenger signaling lipid. Production of PA facilitates Mitofusin-mediated fusion, whereas the cleavage of PA by the Lipin family of phosphatases produces diacylgycerol (DAG) which promotes mitochondrial fission. Regulates mitochondrial shape through facilitating mitochondrial fusion. During spermatogenesis, plays a critical role in PIWI-interacting RNA (piRNA) biogenesis. piRNAs provide essential protection against the activity of mobile genetic elements. piRNA-mediated transposon silencing is thus critical for maintaining genome stability, in particular in germline cells when transposons are mobilized as a consequence of wide-spread genomic demethylation. Has been shown to be a backbone-non-specific, single strand-specific nuclease, cleaving either RNA or DNA substrates with similar affinity. Produces 5' phosphate and 3' hydroxyl termini, suggesting it could directly participate in the processing of primary piRNA transcripts. Has been proposed to act as a cardiolipin hydrolase to generate phosphatidic acid at mitochondrial surface. Although it cannot be excluded that it can act as a phospholipase in some circumstances, this activity could not be confirmed. The chain is Mitochondrial cardiolipin hydrolase (pld6) from Xenopus tropicalis (Western clawed frog).